We begin with the raw amino-acid sequence, 339 residues long: Biotin synthase (339 aa).

The Radical SAM core domain maps to 55-288 (LSEGALHSCS…GKIIKFAAGR (234 aa)). [4Fe-4S] cluster contacts are provided by Cys-73, Cys-77, and Cys-80. Residues Cys-152, Cys-213, and Lys-283 each coordinate [2Fe-2S] cluster.

This sequence belongs to the radical SAM superfamily. Biotin synthase family. As to quaternary structure, homodimer. Requires [4Fe-4S] cluster as cofactor. It depends on [2Fe-2S] cluster as a cofactor.

The enzyme catalyses (4R,5S)-dethiobiotin + (sulfur carrier)-SH + 2 reduced [2Fe-2S]-[ferredoxin] + 2 S-adenosyl-L-methionine = (sulfur carrier)-H + biotin + 2 5'-deoxyadenosine + 2 L-methionine + 2 oxidized [2Fe-2S]-[ferredoxin]. Its pathway is cofactor biosynthesis; biotin biosynthesis; biotin from 7,8-diaminononanoate: step 2/2. Its function is as follows. Catalyzes the conversion of dethiobiotin (DTB) to biotin by the insertion of a sulfur atom into dethiobiotin via a radical-based mechanism. This Chlorobium phaeobacteroides (strain BS1) protein is Biotin synthase.